Reading from the N-terminus, the 101-residue chain is NADH-quinone oxidoreductase subunit K (101 aa).

3 helical membrane-spanning segments follow: residues 4–24 (LAHY…GIFL), 30–50 (IVLL…FVAF), and 61–81 (VFVF…LAIL).

The protein belongs to the complex I subunit 4L family. NDH-1 is composed of 14 different subunits. Subunits NuoA, H, J, K, L, M, N constitute the membrane sector of the complex.

It localises to the cell inner membrane. It carries out the reaction a quinone + NADH + 5 H(+)(in) = a quinol + NAD(+) + 4 H(+)(out). NDH-1 shuttles electrons from NADH, via FMN and iron-sulfur (Fe-S) centers, to quinones in the respiratory chain. The immediate electron acceptor for the enzyme in this species is believed to be ubiquinone. Couples the redox reaction to proton translocation (for every two electrons transferred, four hydrogen ions are translocated across the cytoplasmic membrane), and thus conserves the redox energy in a proton gradient. In Ralstonia nicotianae (strain ATCC BAA-1114 / GMI1000) (Ralstonia solanacearum), this protein is NADH-quinone oxidoreductase subunit K.